An 889-amino-acid polypeptide reads, in one-letter code: Mitochondrial intermediate peptidase (889 aa).

The transit peptide at 1 to 30 (MASTSKNAQRAAASVAHSYHVCLARRMSRL) directs the protein to the mitochondrion. Residues 60-112 (SSSLAAQRVQRPTSAGPILTNPISDHEKDNDELRSLFDAPPTSSSANHLRSSG) are disordered. The span at 83–94 (SDHEKDNDELRS) shows a compositional bias: basic and acidic residues. Over residues 100 to 112 (PTSSSANHLRSSG) the composition is skewed to polar residues. His-670 is a binding site for Zn(2+). The active site involves Glu-671. His-674 and His-677 together coordinate Zn(2+).

Belongs to the peptidase M3 family. Zn(2+) is required as a cofactor.

It is found in the mitochondrion matrix. The enzyme catalyses Release of an N-terminal octapeptide as second stage of processing of some proteins imported into the mitochondrion.. Functionally, cleaves proteins, imported into the mitochondrion, to their mature size. While most mitochondrial precursor proteins are processed to the mature form in one step by mitochondrial processing peptidase (MPP), the sequential cleavage by MIP of an octapeptide after initial processing by MPP is a required step for a subgroup of nuclear-encoded precursor proteins destined for the matrix or the inner membrane. This is Mitochondrial intermediate peptidase (OCT1) from Mycosarcoma maydis (Corn smut fungus).